The sequence spans 330 residues: MNKFKNIAVYGGGSFGTSLASLAAQNCNNVTLFLRDEAIAKEILHNKTNIKYLGDIKLPAHLQATTNLDIIKDFELIIIAVPSYAFDDSIKLLKTHSISKDNTLLIATKGFARNPTALFSDRLKTLLPHSPTAFFAGPNLAKELAKNLPASASIASLDIDIANKIAYNLSAKIFTTNVSSDIVTLQVAGALKNIFAIKSGIDLARKQGENARATLIVAALKEIAILSQALGGMQKNSDILLEVGVVGDLVLTCYSLGSRNTKFGYELGISSDKKKFLQEYKELVEGREALKLVLDLIKKYNLHMPVISKVASCVIPYVIPAKAGIQHKAR.

Serine 14, phenylalanine 15, arginine 35, and lysine 109 together coordinate NADPH. 2 residues coordinate sn-glycerol 3-phosphate: lysine 109 and glycine 137. Residue alanine 141 participates in NADPH binding. 5 residues coordinate sn-glycerol 3-phosphate: lysine 192, aspartate 248, serine 258, arginine 259, and asparagine 260. Lysine 192 functions as the Proton acceptor in the catalytic mechanism. Position 259 (arginine 259) interacts with NADPH. NADPH-binding residues include leucine 283 and glutamate 285.

It belongs to the NAD-dependent glycerol-3-phosphate dehydrogenase family.

It is found in the cytoplasm. The catalysed reaction is sn-glycerol 3-phosphate + NAD(+) = dihydroxyacetone phosphate + NADH + H(+). The enzyme catalyses sn-glycerol 3-phosphate + NADP(+) = dihydroxyacetone phosphate + NADPH + H(+). It participates in membrane lipid metabolism; glycerophospholipid metabolism. Functionally, catalyzes the reduction of the glycolytic intermediate dihydroxyacetone phosphate (DHAP) to sn-glycerol 3-phosphate (G3P), the key precursor for phospholipid synthesis. The polypeptide is Glycerol-3-phosphate dehydrogenase [NAD(P)+] (Rickettsia massiliae (strain Mtu5)).